The primary structure comprises 873 residues: Alanine--tRNA ligase (873 aa).

Residues histidine 559, histidine 563, cysteine 661, and histidine 665 each coordinate Zn(2+).

The protein belongs to the class-II aminoacyl-tRNA synthetase family. As to quaternary structure, homotetramer. It depends on Zn(2+) as a cofactor.

The protein localises to the cytoplasm. It carries out the reaction tRNA(Ala) + L-alanine + ATP = L-alanyl-tRNA(Ala) + AMP + diphosphate. Functionally, catalyzes the attachment of alanine to tRNA(Ala) in a two-step reaction: alanine is first activated by ATP to form Ala-AMP and then transferred to the acceptor end of tRNA(Ala). Also edits incorrectly charged Ser-tRNA(Ala) and Gly-tRNA(Ala) via its editing domain. This Wigglesworthia glossinidia brevipalpis protein is Alanine--tRNA ligase.